A 774-amino-acid chain; its full sequence is E3 ubiquitin-protein ligase UHRF1 (774 aa).

The region spanning 1 to 78 is the Ubiquitin-like domain; it reads MWIQVRTMDG…IQLLVRQSLA (78 aa). Phosphoserine is present on residues Ser-76, Ser-91, Ser-93, Ser-95, and Ser-161. Residues 83-120 are disordered; that stretch reads TKERDSELSDSDSGYGVGHSESDKSSTHGEGTADGDDK. Tudor-like regions lie at residues 129-205 and 212-280; these read GLYK…ARAR and DLEV…IELP. Residue Lys-276 forms a Glycyl lysine isopeptide (Lys-Gly) (interchain with G-Cter in SUMO2) linkage. Ser-284 carries the post-translational modification Phosphoserine. The linker stretch occupies residues 293–298; that stretch reads RKSGPS. At Ser-295 the chain carries Phosphoserine; by PKA. The PHD-type zinc finger occupies 296 to 363; it reads GPSCQYCKDD…EWYCPSCRTD (68 aa). 2 histone H3R2me0 binding regions span residues 330 to 334 and 350 to 352; these read CDECD and PPE. Phosphoserine is present on Ser-365. A Glycyl lysine isopeptide (Lys-Gly) (interchain with G-Cter in SUMO2) cross-link involves residue Lys-382. Residues 382–605 form a methyl-CpG binding and interaction with HDAC1 region; the sequence is KMASATSSSR…QLGLTMQYPE (224 aa). Position 396 is an N6-acetyllysine (Lys-396). The YDG domain occupies 416 to 578; that stretch reads GPIPGVPVGT…FIVWRYLLRR (163 aa). The segment at 442–443 is required to promote base flipping; that stretch reads HV. Residues 460 to 461 and Asp-466 contribute to the DNA site; that span reads AG. Required for formation of a 5-methylcytosine-binding pocket regions lie at residues 463 to 466 and 475 to 478; these read YEDD and YTGS. Residue Ser-511 is modified to Phosphoserine. N6-acetyllysine; alternate is present on Lys-542. Lys-542 is covalently cross-linked (Glycyl lysine isopeptide (Lys-Gly) (interchain with G-Cter in SUMO2); alternate). Residues 616–657 form a disordered region; sequence KNRKRPAKALEQGPSSSKIGKSKRKSTGPATTSPRVSKKSKL. Ser-631 bears the Phosphoserine; by CDK1 mark. 2 positions are modified to phosphoserine: Ser-641 and Ser-648. Residue Lys-656 forms a Glycyl lysine isopeptide (Lys-Gly) (interchain with G-Cter in SUMO2) linkage. Residues 705–744 form an RING-type zinc finger; the sequence is CICCQELVFRPVTTVCQHNVCKDCLDRSFRAQVFSCPACR. Ser-751 carries the phosphoserine modification.

Interacts with DNMT3A and DNMT3B. Interacts with DNMT1; the interaction is direct. Interacts with USP7; leading to its deubiquitination. Interacts with histone H3. Interacts with HDAC1, but not with HDAC2. Interacts with BLTP3A. Interacts with PML. Interacts with EHMT2. Binds methylated CpG containing oligonucleotides. Interacts with ZNF263; recruited to the SIX3 promoter along with other proteins involved in chromatin modification and transcriptional corepression where it contributes to transcriptional repression. Interacts with UHRF2. Interacts with FANCD2. Interacts with TET1 isoform 2; this interaction induces the recruitment of TET1 isoform 2 to replicating heterochromatin. Phosphorylation at Ser-295 of the linker region decreases the binding to H3K9me3. Phosphorylation at Ser-631 by CDK1 during M phase impairs interaction with USP7, preventing deubiquitination and leading to degradation by the proteasome. Post-translationally, ubiquitinated; which leads to proteasomal degradation. Autoubiquitinated; interaction with USP7 leads to deubiquitination and prevents degradation. Ubiquitination and degradation takes place during M phase, when phosphorylation at Ser-631 prevents interaction with USP7 and subsequent deubiquitination. Polyubiquitination may be stimulated by DNA damage.

The protein resides in the nucleus. It carries out the reaction S-ubiquitinyl-[E2 ubiquitin-conjugating enzyme]-L-cysteine + [acceptor protein]-L-lysine = [E2 ubiquitin-conjugating enzyme]-L-cysteine + N(6)-ubiquitinyl-[acceptor protein]-L-lysine.. Its pathway is protein modification; protein ubiquitination. Its function is as follows. Multidomain protein that acts as a key epigenetic regulator by bridging DNA methylation and chromatin modification. Specifically recognizes and binds hemimethylated DNA at replication forks via its YDG domain and recruits DNMT1 methyltransferase to ensure faithful propagation of the DNA methylation patterns through DNA replication. In addition to its role in maintenance of DNA methylation, also plays a key role in chromatin modification: through its tudor-like regions and PHD-type zinc fingers, specifically recognizes and binds histone H3 trimethylated at 'Lys-9' (H3K9me3) and unmethylated at 'Arg-2' (H3R2me0), respectively, and recruits chromatin proteins. Enriched in pericentric heterochromatin where it recruits different chromatin modifiers required for this chromatin replication. Also localizes to euchromatic regions where it negatively regulates transcription possibly by impacting DNA methylation and histone modifications. Has E3 ubiquitin-protein ligase activity by mediating the ubiquitination of target proteins such as histone H3 and PML. It is still unclear how E3 ubiquitin-protein ligase activity is related to its role in chromatin in vivo. Plays a role in DNA repair by cooperating with UHRF2 to ensure recruitment of FANCD2 to interstrand cross-links (ICLs) leading to FANCD2 activation. Plays a pivotal role in the establishment of correct spindle architecture by catalyzing the 'Lys-63'-linked ubiquitination of KIF11, thereby controlling KIF11 localization on the spindle. In Rattus norvegicus (Rat), this protein is E3 ubiquitin-protein ligase UHRF1 (Uhrf1).